We begin with the raw amino-acid sequence, 101 residues long: DNA-binding protein TubR (101 aa).

As to quaternary structure, homodimer. Dimers bind to DNA, forming a protein-bound filament which may form a helix around the TubZ filament.

A DNA-binding protein that is part of the type III plasmid partition system used to ensure correct segregation of the pBM400 plasmid. Binds the plasmid origin of replication, probably cooperatively, forming a ring or short helix with external DNA. Its effect on RNA expression has not been shown. This Priestia megaterium (strain ATCC 12872 / QMB1551) (Bacillus megaterium) protein is DNA-binding protein TubR.